Consider the following 469-residue polypeptide: Pentatricopeptide repeat-containing protein At2g34370, mitochondrial (469 aa).

The N-terminal 65 residues, 1–65 (MVRLVCSRIL…QNRSFVQCRR (65 aa)), are a transit peptide targeting the mitochondrion. PPR repeat units follow at residues 142 to 172 (DARS…MPKR), 173 to 207 (NSET…GNKP), 208 to 238 (DKEI…MYRD), and 244 to 274 (SMED…MTVE). Positions 375–469 (DIGFVPATRV…NGVCSCKDYW (95 aa)) are type DYW motif.

Belongs to the PPR family. PCMP-H subfamily.

Its subcellular location is the mitochondrion. This chain is Pentatricopeptide repeat-containing protein At2g34370, mitochondrial (PCMP-H25), found in Arabidopsis thaliana (Mouse-ear cress).